The chain runs to 261 residues: Triosephosphate isomerase (261 aa).

10–12 lines the substrate pocket; that stretch reads NWK. H100 (electrophile) is an active-site residue. The Proton acceptor role is filled by E172. Residues G178, S218, and 239–240 each bind substrate; that span reads GG.

This sequence belongs to the triosephosphate isomerase family. In terms of assembly, homodimer.

It localises to the cytoplasm. It carries out the reaction D-glyceraldehyde 3-phosphate = dihydroxyacetone phosphate. The protein operates within carbohydrate biosynthesis; gluconeogenesis. Its pathway is carbohydrate degradation; glycolysis; D-glyceraldehyde 3-phosphate from glycerone phosphate: step 1/1. Its function is as follows. Involved in the gluconeogenesis. Catalyzes stereospecifically the conversion of dihydroxyacetone phosphate (DHAP) to D-glyceraldehyde-3-phosphate (G3P). The chain is Triosephosphate isomerase from Mycobacterium bovis (strain BCG / Pasteur 1173P2).